Reading from the N-terminus, the 132-residue chain is Small ribosomal subunit protein uS8 (132 aa).

It belongs to the universal ribosomal protein uS8 family. As to quaternary structure, part of the 30S ribosomal subunit. Contacts proteins S5 and S12.

Its function is as follows. One of the primary rRNA binding proteins, it binds directly to 16S rRNA central domain where it helps coordinate assembly of the platform of the 30S subunit. In Clostridium botulinum (strain 657 / Type Ba4), this protein is Small ribosomal subunit protein uS8.